Consider the following 344-residue polypeptide: Methionine import ATP-binding protein MetN (344 aa).

In terms of domain architecture, ABC transporter spans 2-241; it reads LELKQVGKVY…PQAEVTKAFV (240 aa). ATP is bound at residue 38–45; the sequence is GYSGAGKS.

It belongs to the ABC transporter superfamily. Methionine importer (TC 3.A.1.24) family. As to quaternary structure, the complex is composed of two ATP-binding proteins (MetN), two transmembrane proteins (MetI) and a solute-binding protein (MetQ).

It is found in the cell membrane. It carries out the reaction L-methionine(out) + ATP + H2O = L-methionine(in) + ADP + phosphate + H(+). The catalysed reaction is D-methionine(out) + ATP + H2O = D-methionine(in) + ADP + phosphate + H(+). Functionally, part of the ABC transporter complex MetNIQ involved in methionine import. Responsible for energy coupling to the transport system. In Latilactobacillus sakei subsp. sakei (strain 23K) (Lactobacillus sakei subsp. sakei), this protein is Methionine import ATP-binding protein MetN.